The sequence spans 263 residues: MNKRAAIQRAKIKMKILLSNDDGVYAQGIHALADALRDLAEIVIVAPDRNRSGASNSLTLEHPLRVSQIAENTYSVQGTPTDCVHFALNELMKDALPDLVLSGINHGANLGDDVLYSGTVAAAMEGHFLGVQSIAFSLAGTTHFASAAHFVRQLVEQHLANPIPTNRLLNVNIPDRPLELIQGIEVTRLGARHHAESMIKQKDPRGHDIYWLGPPGKEQDAGPGTDFHAIERGWVSLTPLQVDLTAHESLRSMDHWLKEKVNG.

4 residues coordinate a divalent metal cation: aspartate 21, aspartate 22, serine 52, and asparagine 105.

This sequence belongs to the SurE nucleotidase family. The cofactor is a divalent metal cation.

The protein resides in the cytoplasm. It catalyses the reaction a ribonucleoside 5'-phosphate + H2O = a ribonucleoside + phosphate. Functionally, nucleotidase that shows phosphatase activity on nucleoside 5'-monophosphates. This is 5'-nucleotidase SurE from Vibrio cholerae serotype O1 (strain ATCC 39541 / Classical Ogawa 395 / O395).